A 600-amino-acid chain; its full sequence is MCGIVGYIGQLDAKEILLKGLEKLEYRGYDSAGIAVANEQGIHVFKEKGRIADLREVVDANIEAKAGIGHTRWATHGEPSYLNAHPHQSALGRFTLVHNGVIENYVQLKQEYLQDVELKSDTDTEVVVQVIEQFVNGGLDTEEAFRKTLTLLKGSYAIALFDNENRETIFVAKNKSPLLVGLGDTFNVVASDAMAMLQVTNEYVELMDKEMVIVTDDQVVIKNLDGDVISRASYIAELDASDIEKGTYPHYMLKETDEQPVVMRKIIQTYQDENGKLSVPGDIAAAVAEADRIYIIGCGTSYHAGLVGKQYIEMWANVPVEVHVASEFSYNMPLLSKKPLFIFLSQSGETADSRAVLVQVKALGHKALTITNVPGSTLSREADYTLLLHAGPEIAVASTKAYTAQIAVLAVLASVAADKNGIDIGFDLVKELGIAANAMEALCDQKDEMEMIAREYLTVSRNAFFIGRGLDYFVCVEGALKLKEISYIQAEGFAGGELKHGTIALIEQGTPVFALATQEHVNLSIRGNVKEVAARGANTCIISLKGLDDADDRFVLPEVNPALAPLVSVVPLQLIAYYAALHRGCDVDKPRNLAKSVTVE.

Cys2 (nucleophile; for GATase activity) is an active-site residue. Residues 2–217 (CGIVGYIGQL…DKEMVIVTDD (216 aa)) enclose the Glutamine amidotransferase type-2 domain. SIS domains follow at residues 283–422 (IAAA…KNGI) and 452–590 (IARE…VDKP). Catalysis depends on Lys595, which acts as the For Fru-6P isomerization activity.

As to quaternary structure, homodimer.

It localises to the cytoplasm. It catalyses the reaction D-fructose 6-phosphate + L-glutamine = D-glucosamine 6-phosphate + L-glutamate. Its function is as follows. Catalyzes the first step in hexosamine metabolism, converting fructose-6P into glucosamine-6P using glutamine as a nitrogen source. The chain is Glutamine--fructose-6-phosphate aminotransferase [isomerizing] (glmS) from Bacillus spizizenii (strain ATCC 23059 / NRRL B-14472 / W23) (Bacillus subtilis subsp. spizizenii).